Consider the following 473-residue polypeptide: Adhesive plaque matrix protein 2 (473 aa).

Residues 1-17 form the signal peptide; sequence MLFSFFLLLTCTQLCLG. 4 positions are modified to 3',4'-dihydroxyphenylalanine: tyrosine 23, tyrosine 31, tyrosine 36, and tyrosine 43. EGF-like domains follow at residues 45–81, 82–117, 118–154, 155–191, 192–228, 229–265, 266–301, 302–340, 342–378, 383–420, and 425–461; these read PVNPCLKKPCKYNGVCKPRGGSYKCFCKGGYYGYNCN, LKNACKPNQCKNKSRCVPVGKTFKCVCRNGNFGRLC, EKNVCSPNPCKNNGKCSPLGKTGYKCTCSGGYTGPRC, EVHACKPNPCKNKGRCFPDGKTGYKCRCVDGYSGPTC, QENACKPNPCSNGGTCSADKFGDYSCECRPGYFGPEC, ERYVCAPNPCKNGGICSSDGSGGYRCRCKGGYSGPTC, KVNVCKPTPCKNSGRCVNKGSSYNCICKGGYSGPTC, GENVCKPNPCQNRGRCYPDNSDDGFKCRCVGGYKGPTCE, KPNPCNTKPCKNGGKCNYNGKIYTCKCAYGWRGRHCT, KPNPCVVSKPCKNRGKCIWNGKAYRCKCAYGYGGRHCT, and KKNPCASRPCKNRGKCTDKGNGYVCKCARGYSGRYCS. Cystine bridges form between cysteine 49-cysteine 60, cysteine 54-cysteine 69, cysteine 71-cysteine 80, cysteine 86-cysteine 97, cysteine 91-cysteine 106, cysteine 108-cysteine 117, cysteine 122-cysteine 133, cysteine 127-cysteine 143, cysteine 145-cysteine 154, cysteine 159-cysteine 170, cysteine 164-cysteine 180, cysteine 182-cysteine 191, cysteine 196-cysteine 207, cysteine 201-cysteine 217, cysteine 219-cysteine 228, cysteine 233-cysteine 244, cysteine 238-cysteine 254, cysteine 256-cysteine 265, cysteine 270-cysteine 281, cysteine 275-cysteine 290, cysteine 292-cysteine 301, cysteine 306-cysteine 317, cysteine 311-cysteine 328, cysteine 330-cysteine 339, cysteine 346-cysteine 357, cysteine 351-cysteine 366, cysteine 368-cysteine 377, cysteine 387-cysteine 399, cysteine 393-cysteine 408, cysteine 410-cysteine 419, cysteine 429-cysteine 440, cysteine 434-cysteine 449, and cysteine 451-cysteine 460. Asparagine 93 is a glycosylation site (N-linked (GlcNAc...) asparagine).

Post-translationally, contains L-DOPA (3',4'-dihydroxyphenylalanine). In terms of tissue distribution, produced by the byssal gland.

It is found in the secreted. In terms of biological role, provides adhesiveness to the mussel's foot. Mussels produce one of the strongest water insoluble glues. The mussel's adhesive is a bundle of threads, called a byssus, formed by a fibrous collagenous core coated with adhesive proteins. This is Adhesive plaque matrix protein 2 (FP2) from Mytilus galloprovincialis (Mediterranean mussel).